Consider the following 97-residue polypeptide: Large ribosomal subunit protein uL23 (97 aa).

The protein belongs to the universal ribosomal protein uL23 family. As to quaternary structure, part of the 50S ribosomal subunit. Contacts protein L29, and trigger factor when it is bound to the ribosome.

One of the early assembly proteins it binds 23S rRNA. One of the proteins that surrounds the polypeptide exit tunnel on the outside of the ribosome. Forms the main docking site for trigger factor binding to the ribosome. This is Large ribosomal subunit protein uL23 from Anaeromyxobacter sp. (strain Fw109-5).